Consider the following 352-residue polypeptide: Probable RNA methyltransferase CV_2253 (352 aa).

The active-site Proton acceptor is E91. Positions 94-320 (LLPRDGLCVS…TKVRDSAGQD (227 aa)) constitute a Radical SAM core domain. C101 and C325 form a disulfide bridge. 3 residues coordinate [4Fe-4S] cluster: C108, C112, and C115. S-adenosyl-L-methionine contacts are provided by residues 153–154 (GE), S183, 206–208 (SLH), and N282. The S-methylcysteine intermediate role is filled by C325.

This sequence belongs to the radical SAM superfamily. RlmN family. [4Fe-4S] cluster is required as a cofactor.

It is found in the cytoplasm. The polypeptide is Probable RNA methyltransferase CV_2253 (Chromobacterium violaceum (strain ATCC 12472 / DSM 30191 / JCM 1249 / CCUG 213 / NBRC 12614 / NCIMB 9131 / NCTC 9757 / MK)).